The primary structure comprises 254 residues: 5-oxoprolinase subunit A (254 aa).

The protein belongs to the LamB/PxpA family. As to quaternary structure, forms a complex composed of PxpA, PxpB and PxpC.

It catalyses the reaction 5-oxo-L-proline + ATP + 2 H2O = L-glutamate + ADP + phosphate + H(+). Functionally, catalyzes the cleavage of 5-oxoproline to form L-glutamate coupled to the hydrolysis of ATP to ADP and inorganic phosphate. The sequence is that of 5-oxoprolinase subunit A from Rhodopseudomonas palustris (strain BisB5).